The primary structure comprises 89 residues: Small ribosomal subunit protein uS15 (89 aa).

Belongs to the universal ribosomal protein uS15 family. Part of the 30S ribosomal subunit. Forms a bridge to the 50S subunit in the 70S ribosome, contacting the 23S rRNA.

In terms of biological role, one of the primary rRNA binding proteins, it binds directly to 16S rRNA where it helps nucleate assembly of the platform of the 30S subunit by binding and bridging several RNA helices of the 16S rRNA. Forms an intersubunit bridge (bridge B4) with the 23S rRNA of the 50S subunit in the ribosome. This chain is Small ribosomal subunit protein uS15, found in Nitrosomonas eutropha (strain DSM 101675 / C91 / Nm57).